A 406-amino-acid chain; its full sequence is Pyridinium-3,5-bisthiocarboxylic acid mononucleotide nickel insertion protein (406 aa).

Belongs to the LarC family.

It carries out the reaction Ni(II)-pyridinium-3,5-bisthiocarboxylate mononucleotide = pyridinium-3,5-bisthiocarboxylate mononucleotide + Ni(2+). Its function is as follows. Involved in the biosynthesis of a nickel-pincer cofactor ((SCS)Ni(II) pincer complex). Binds Ni(2+), and functions in nickel delivery to pyridinium-3,5-bisthiocarboxylic acid mononucleotide (P2TMN), to form the mature cofactor. Is thus probably required for the activation of nickel-pincer cofactor-dependent enzymes. In Akkermansia muciniphila (strain ATCC BAA-835 / DSM 22959 / JCM 33894 / BCRC 81048 / CCUG 64013 / CIP 107961 / Muc), this protein is Pyridinium-3,5-bisthiocarboxylic acid mononucleotide nickel insertion protein.